The following is a 101-amino-acid chain: Movement protein (101 aa).

A helical membrane pass occupies residues Glu30 to Leu50.

This sequence belongs to the mastrevirus movement protein family. In terms of assembly, interacts with the capsid protein (CP). Part of a MP-CP-viral DNA complex.

The protein resides in the host membrane. In terms of biological role, involved in the viral transport within, and between cells. The chain is Movement protein from Maize streak virus genotype D (isolate Raw) (MSV).